We begin with the raw amino-acid sequence, 335 residues long: tRNA N6-adenosine threonylcarbamoyltransferase (335 aa).

A divalent metal cation-binding residues include His109, His113, and Tyr130. Substrate contacts are provided by residues 130–134 (YVSGG), Asp162, Gly177, Glu181, and Asn266. Residue Asp294 participates in a divalent metal cation binding.

It belongs to the KAE1 / TsaD family. As to quaternary structure, component of the EKC/KEOPS complex composed of at least tp53rk, tprkb, osgep and lage3; the whole complex dimerizes. Requires a divalent metal cation as cofactor.

The protein localises to the cytoplasm. It localises to the nucleus. It carries out the reaction L-threonylcarbamoyladenylate + adenosine(37) in tRNA = N(6)-L-threonylcarbamoyladenosine(37) in tRNA + AMP + H(+). Its function is as follows. Component of the EKC/KEOPS complex that is required for the formation of a threonylcarbamoyl group on adenosine at position 37 (t(6)A37) in tRNAs that read codons beginning with adenine. The complex is probably involved in the transfer of the threonylcarbamoyl moiety of threonylcarbamoyl-AMP (TC-AMP) to the N6 group of A37. OSGEP likely plays a direct catalytic role in this reaction, but requires other protein(s) of the complex to fulfill this activity. This is tRNA N6-adenosine threonylcarbamoyltransferase from Danio rerio (Zebrafish).